We begin with the raw amino-acid sequence, 339 residues long: GTP 3',8-cyclase (339 aa).

The Radical SAM core domain occupies 20-241 (NFDRKFEYLR…WTQKQSLSHD (222 aa)). Arg-29 contacts GTP. Positions 36 and 40 each coordinate [4Fe-4S] cluster. Tyr-42 serves as a coordination point for S-adenosyl-L-methionine. Residue Cys-43 coordinates [4Fe-4S] cluster. Arg-78 serves as a coordination point for GTP. Gly-82 provides a ligand contact to S-adenosyl-L-methionine. GTP is bound at residue Thr-109. Ser-133 serves as a coordination point for S-adenosyl-L-methionine. Position 170 (Lys-170) interacts with GTP. Position 204 (Met-204) interacts with S-adenosyl-L-methionine. [4Fe-4S] cluster-binding residues include Cys-267 and Cys-270. Position 272-274 (272-274 (RLR)) interacts with GTP. Position 284 (Cys-284) interacts with [4Fe-4S] cluster.

This sequence belongs to the radical SAM superfamily. MoaA family. Monomer and homodimer. It depends on [4Fe-4S] cluster as a cofactor.

The catalysed reaction is GTP + AH2 + S-adenosyl-L-methionine = (8S)-3',8-cyclo-7,8-dihydroguanosine 5'-triphosphate + 5'-deoxyadenosine + L-methionine + A + H(+). The protein operates within cofactor biosynthesis; molybdopterin biosynthesis. Catalyzes the cyclization of GTP to (8S)-3',8-cyclo-7,8-dihydroguanosine 5'-triphosphate. This chain is GTP 3',8-cyclase, found in Psychromonas ingrahamii (strain DSM 17664 / CCUG 51855 / 37).